The following is a 419-amino-acid chain: GTPase Obg (419 aa).

Positions 2 to 159 (SAFVDAVTVE…FLAKVELQVL (158 aa)) constitute an Obg domain. The OBG-type G domain occupies 160 to 325 (ADVGLLGYPN…LKYEIATTLK (166 aa)). GTP contacts are provided by residues 166–173 (GYPNVGKS), 191–195 (FTTLS), 212–215 (DLPG), 279–282 (NKMD), and 306–308 (SAL). Mg(2+) contacts are provided by Ser-173 and Thr-193. One can recognise an OCT domain in the interval 341–419 (LNAEDAVDFI…IFSYEFEYLE (79 aa)).

This sequence belongs to the TRAFAC class OBG-HflX-like GTPase superfamily. OBG GTPase family. In terms of assembly, monomer. Mg(2+) is required as a cofactor.

Its subcellular location is the cytoplasm. In terms of biological role, an essential GTPase which binds GTP, GDP and possibly (p)ppGpp with moderate affinity, with high nucleotide exchange rates and a fairly low GTP hydrolysis rate. Plays a role in control of the cell cycle, stress response, ribosome biogenesis and in those bacteria that undergo differentiation, in morphogenesis control. This is GTPase Obg from Acholeplasma laidlawii (strain PG-8A).